A 152-amino-acid chain; its full sequence is Protein NrdI (152 aa).

Belongs to the NrdI family.

Its function is as follows. Probably involved in ribonucleotide reductase function. This chain is Protein NrdI, found in Rhodococcus opacus (strain B4).